Reading from the N-terminus, the 363-residue chain is Protein-glutamate methylesterase/protein-glutamine glutaminase 3 (363 aa).

One can recognise a Response regulatory domain in the interval 8–125 (KVLCVDDSAL…RDGMLDYAEK (118 aa)). 4-aspartylphosphate is present on Asp59. A CheB-type methylesterase domain is found at 164-356 (LVSTEKLIII…RRVMARLATM (193 aa)). Residues Ser176, His202, and Asp298 contribute to the active site.

It belongs to the CheB family. Phosphorylated by CheA. Phosphorylation of the N-terminal regulatory domain activates the methylesterase activity.

Its subcellular location is the cytoplasm. It carries out the reaction [protein]-L-glutamate 5-O-methyl ester + H2O = L-glutamyl-[protein] + methanol + H(+). It catalyses the reaction L-glutaminyl-[protein] + H2O = L-glutamyl-[protein] + NH4(+). Functionally, involved in chemotaxis. Part of a chemotaxis signal transduction system that modulates chemotaxis in response to various stimuli. Catalyzes the demethylation of specific methylglutamate residues introduced into the chemoreceptors (methyl-accepting chemotaxis proteins or MCP) by CheR. Also mediates the irreversible deamidation of specific glutamine residues to glutamic acid. This Burkholderia lata (strain ATCC 17760 / DSM 23089 / LMG 22485 / NCIMB 9086 / R18194 / 383) protein is Protein-glutamate methylesterase/protein-glutamine glutaminase 3.